The sequence spans 416 residues: RNA polymerase sigma factor SigA (416 aa).

The tract at residues 184–254 (MVQSNLRLVV…TRAIADQSRT (71 aa)) is sigma-70 factor domain-2. The Interaction with polymerase core subunit RpoC signature appears at 208–211 (DLIQ). The sigma-70 factor domain-3 stretch occupies residues 263–338 (ETISRIKKTT…EADGETPEDE (76 aa)). A sigma-70 factor domain-4 region spans residues 351 to 404 (VLDTLSPRERDVLRLRYGLDDGRMKTLEEIGQIFNVTRERIRQIEAKALRKLRH). Residues 377–396 (LEEIGQIFNVTRERIRQIEA) constitute a DNA-binding region (H-T-H motif).

Belongs to the sigma-70 factor family. RpoD/SigA subfamily. In terms of assembly, interacts transiently with the RNA polymerase catalytic core.

Its subcellular location is the cytoplasm. Sigma factors are initiation factors that promote the attachment of RNA polymerase to specific initiation sites and are then released. This sigma factor is the primary sigma factor during exponential growth. The sequence is that of RNA polymerase sigma factor SigA from Microcystis aeruginosa.